A 224-amino-acid polypeptide reads, in one-letter code: PKHD-type hydroxylase CYB_2270 (224 aa).

Positions 78–176 (LIHSILISCY…RYAAVSWVQS (99 aa)) constitute a Fe2OG dioxygenase domain. Histidine 96, aspartate 98, and histidine 157 together coordinate Fe cation. Arginine 167 serves as a coordination point for 2-oxoglutarate.

Fe(2+) is required as a cofactor. It depends on L-ascorbate as a cofactor.

This is PKHD-type hydroxylase CYB_2270 from Synechococcus sp. (strain JA-2-3B'a(2-13)) (Cyanobacteria bacterium Yellowstone B-Prime).